A 453-amino-acid chain; its full sequence is Tubulin gamma chain (453 aa).

A GTP-binding site is contributed by 142–148; it reads AGGTGSG.

Belongs to the tubulin family.

It localises to the cytoplasm. It is found in the cytoskeleton. The protein resides in the microtubule organizing center. The protein localises to the spindle pole body. Its function is as follows. Tubulin is the major constituent of microtubules. The gamma chain is found at microtubule organizing centers (MTOC) such as the spindle poles or the centrosome, suggesting that it is involved in the minus-end nucleation of microtubule assembly. The polypeptide is Tubulin gamma chain (TUB4) (Coprinopsis cinerea (strain Okayama-7 / 130 / ATCC MYA-4618 / FGSC 9003) (Inky cap fungus)).